Reading from the N-terminus, the 256-residue chain is Probable enoyl-CoA hydratase echA14 (256 aa).

Residues 235 to 256 (GPQAKSVQSPEFAARLAAAQHR) form a disordered region.

Belongs to the enoyl-CoA hydratase/isomerase family.

The enzyme catalyses a (3S)-3-hydroxyacyl-CoA = a (2E)-enoyl-CoA + H2O. It catalyses the reaction a 4-saturated-(3S)-3-hydroxyacyl-CoA = a (3E)-enoyl-CoA + H2O. Its function is as follows. Could possibly oxidize fatty acids using specific components. The sequence is that of Probable enoyl-CoA hydratase echA14 (echA14) from Mycobacterium tuberculosis (strain CDC 1551 / Oshkosh).